Reading from the N-terminus, the 329-residue chain is Anthranilate phosphoribosyltransferase (329 aa).

5-phospho-alpha-D-ribose 1-diphosphate-binding positions include glycine 78, 81–82 (GD), threonine 86, 88–91 (NLST), 106–114 (KHGNRSASG), and serine 118. Residue glycine 78 participates in anthranilate binding. Serine 90 contacts Mg(2+). An anthranilate-binding site is contributed by asparagine 109. Arginine 164 is a binding site for anthranilate. Aspartate 221 and glutamate 222 together coordinate Mg(2+).

The protein belongs to the anthranilate phosphoribosyltransferase family. As to quaternary structure, homodimer. The cofactor is Mg(2+).

It catalyses the reaction N-(5-phospho-beta-D-ribosyl)anthranilate + diphosphate = 5-phospho-alpha-D-ribose 1-diphosphate + anthranilate. Its pathway is amino-acid biosynthesis; L-tryptophan biosynthesis; L-tryptophan from chorismate: step 2/5. Catalyzes the transfer of the phosphoribosyl group of 5-phosphorylribose-1-pyrophosphate (PRPP) to anthranilate to yield N-(5'-phosphoribosyl)-anthranilate (PRA). The protein is Anthranilate phosphoribosyltransferase of Pyrobaculum islandicum (strain DSM 4184 / JCM 9189 / GEO3).